A 214-amino-acid chain; its full sequence is Adenylate kinase (214 aa).

10 to 15 (GAGKGT) is an ATP binding site. The NMP stretch occupies residues 30–59 (STGDMLRAAIKAGTELGKQAKSVIDAGQLV). AMP-binding positions include threonine 31, arginine 36, 57–59 (QLV), 85–88 (GFPR), and glutamine 92. The tract at residues 122–159 (GRRAHLPSGRTYHVVYNPPKEEGKDDETGEPLVIREDD) is LID. ATP contacts are provided by residues arginine 123 and 132–133 (TY). The AMP site is built by arginine 156 and arginine 167. Lysine 200 lines the ATP pocket.

This sequence belongs to the adenylate kinase family. As to quaternary structure, monomer.

The protein resides in the cytoplasm. It catalyses the reaction AMP + ATP = 2 ADP. It participates in purine metabolism; AMP biosynthesis via salvage pathway; AMP from ADP: step 1/1. Functionally, catalyzes the reversible transfer of the terminal phosphate group between ATP and AMP. Plays an important role in cellular energy homeostasis and in adenine nucleotide metabolism. The polypeptide is Adenylate kinase (Aliivibrio fischeri (strain ATCC 700601 / ES114) (Vibrio fischeri)).